The following is a 301-amino-acid chain: Troponin T, cardiac muscle (301 aa).

Positions 1 to 72 (MSDAEEVVEE…EAKDAEEGPV (72 aa)) are enriched in acidic residues. Disordered regions lie at residues 1-97 (MSDA…DGER) and 125-224 (NRKK…KKKI). At serine 2 the chain carries N-acetylserine. Serine 2 is subject to Phosphoserine; by CK2. 2 stretches are compositionally biased toward basic and acidic residues: residues 125-186 (NRKK…DEAR) and 206-224 (QTER…KKKI). Position 207 is a phosphothreonine; by PKC/PRKCA (threonine 207). A Phosphoserine; by PKC/PRKCA modification is found at serine 211. Threonine 216 carries the post-translational modification Phosphothreonine; by PKC/PRKCA and RAF1. Position 297 is a phosphothreonine; by PKC/PRKCA (threonine 297).

The protein belongs to the troponin T family. Phosphorylation at Thr-216 by PRKCA induces significant reduction in myofilament calcium sensitivity and actomyosin ATPase activity.

Its function is as follows. Troponin T is the tropomyosin-binding subunit of troponin, the thin filament regulatory complex which confers calcium-sensitivity to striated muscle actomyosin ATPase activity. This chain is Troponin T, cardiac muscle (Tnnt2), found in Mus musculus (Mouse).